Reading from the N-terminus, the 289-residue chain is Pyridoxal kinase PdxY (289 aa).

Residues Ser-9 and 44 to 45 (TQ) contribute to the substrate site. ATP contacts are provided by residues Asp-112, Ala-144, Glu-149, Lys-183, and 210 to 213 (RPLV). Residue Asp-225 participates in substrate binding.

Belongs to the pyridoxine kinase family. PdxY subfamily. As to quaternary structure, homodimer. Mg(2+) serves as cofactor.

It carries out the reaction pyridoxal + ATP = pyridoxal 5'-phosphate + ADP + H(+). It participates in cofactor metabolism; pyridoxal 5'-phosphate salvage; pyridoxal 5'-phosphate from pyridoxal: step 1/1. Pyridoxal kinase involved in the salvage pathway of pyridoxal 5'-phosphate (PLP). Catalyzes the phosphorylation of pyridoxal to PLP. The chain is Pyridoxal kinase PdxY from Proteus mirabilis.